An 80-amino-acid polypeptide reads, in one-letter code: Small ribosomal subunit protein bS18 (80 aa).

Belongs to the bacterial ribosomal protein bS18 family. As to quaternary structure, part of the 30S ribosomal subunit. Forms a tight heterodimer with protein bS6.

Its function is as follows. Binds as a heterodimer with protein bS6 to the central domain of the 16S rRNA, where it helps stabilize the platform of the 30S subunit. The chain is Small ribosomal subunit protein bS18 from Acholeplasma laidlawii (strain PG-8A).